The following is a 225-amino-acid chain: Superoxide dismutase [Mn], mitochondrial (225 aa).

A mitochondrion-targeting transit peptide spans 1 to 27 (MITAITRTALPRATLRTSLATMSTIRA). Positions 53, 101, 187, and 191 each coordinate Mn(2+).

It belongs to the iron/manganese superoxide dismutase family. Mn(2+) serves as cofactor.

The protein localises to the mitochondrion. It is found in the cytoplasm. It catalyses the reaction 2 superoxide + 2 H(+) = H2O2 + O2. Functionally, destroys radicals which are normally produced within the cells and which are toxic to biological systems. Destroys mitochondrial radicals produced by oxidative stress. In terms of biological role, destroys cytoplasmic radicals produced in low copper environments; a condition which inactivates the cytoplasmic copper-dependent superoxide dismutase SOD1. This chain is Superoxide dismutase [Mn], mitochondrial, found in Cryptococcus neoformans var. grubii serotype A (strain H99 / ATCC 208821 / CBS 10515 / FGSC 9487) (Filobasidiella neoformans var. grubii).